The primary structure comprises 424 residues: MSVAVLAFGLNHTSAPVSVRERVSMPVDLVKPALEGLRATFGGAVREAAILSTCNRTELYCAAEGQVAEHLPAWLAEHNRLEAAALRPHLYRHQHDDAVRHAFRVASGLDSMVLGEPQILGQMKDAVRAANEAGALGTLLHQLFQRTFSVAKEVRSQTAIGAHSVSMAAAAVRLAERVFGQLEDARTLFIGAGEMIELCATHFAAQRPRSMVVANRTIERAETLAGRFSAQTMKLADLTERLAEFDVIVSCTASSLPILGLGMVERATRQRRHRPMVMIDLAVPRDIEPEVGRLDDVYLYSVDDLGRLVQSGTDARRAAVVQAEAIIETRVQGFMHWMQSREVVPVIRDLHQAADDVRAAELERARRMLARGESPEAVLEQLAHGLTQKYLHGPLAALNRSEGDERRQLLAWVPRLFPGRDSRR.

Substrate-binding positions include 53–56 (TCNR), Ser111, 116–118 (EPQ), and Gln122. Cys54 (nucleophile) is an active-site residue. An NADP(+)-binding site is contributed by 191 to 196 (GAGEMI).

Belongs to the glutamyl-tRNA reductase family. In terms of assembly, homodimer.

The enzyme catalyses (S)-4-amino-5-oxopentanoate + tRNA(Glu) + NADP(+) = L-glutamyl-tRNA(Glu) + NADPH + H(+). It participates in porphyrin-containing compound metabolism; protoporphyrin-IX biosynthesis; 5-aminolevulinate from L-glutamyl-tRNA(Glu): step 1/2. Catalyzes the NADPH-dependent reduction of glutamyl-tRNA(Glu) to glutamate 1-semialdehyde (GSA). This Bordetella bronchiseptica (strain ATCC BAA-588 / NCTC 13252 / RB50) (Alcaligenes bronchisepticus) protein is Glutamyl-tRNA reductase.